A 425-amino-acid polypeptide reads, in one-letter code: Homogentisate 1,2-dioxygenase (425 aa).

Catalysis depends on histidine 283, which acts as the Proton acceptor. Histidine 326 and glutamate 332 together coordinate Fe cation. The homogentisate site is built by tyrosine 341 and histidine 362. Histidine 362 provides a ligand contact to Fe cation.

Belongs to the homogentisate dioxygenase family. Hexamer; dimer of trimers. The cofactor is Fe cation.

It catalyses the reaction homogentisate + O2 = 4-maleylacetoacetate + H(+). The protein operates within amino-acid degradation; L-phenylalanine degradation; acetoacetate and fumarate from L-phenylalanine: step 4/6. Involved in the catabolism of homogentisate (2,5-dihydroxyphenylacetate or 2,5-OH-PhAc), a central intermediate in the degradation of phenylalanine and tyrosine. Catalyzes the oxidative ring cleavage of the aromatic ring of homogentisate to yield maleylacetoacetate. The polypeptide is Homogentisate 1,2-dioxygenase (Caulobacter vibrioides (strain ATCC 19089 / CIP 103742 / CB 15) (Caulobacter crescentus)).